We begin with the raw amino-acid sequence, 212 residues long: Ropporin-1 (212 aa).

Residues 12–49 form the RIIa domain; sequence PELPKMLKEFAKAAIRAQPQDLIQWGADYFEALSRGET. S56 is subject to Phosphoserine. The segment at 209 to 212 is interaction with RHPN1; sequence VWLE.

The protein belongs to the ropporin family. As to quaternary structure, homodimer. Interacts with AKAP3. May interact with SPA17. Interacts with RHPN1. Interacts with FSCB; the interaction increases upon spermatozoa capacitation conditions. Interacts with CFAP61. Sumoylated, sumoylation decreases upon spermatozoa capacitation conditions.

It localises to the cell projection. It is found in the cilium. The protein resides in the flagellum. Important for male fertility. With ROPN1L, involved in fibrous sheath integrity and sperm motility, plays a role in PKA-dependent signaling processes required for spermatozoa capacitation. This is Ropporin-1 (ROPN1) from Macaca fascicularis (Crab-eating macaque).